Reading from the N-terminus, the 223-residue chain is Deoxyribose-phosphate aldolase (223 aa).

Catalysis depends on Asp-91, which acts as the Proton donor/acceptor. The active-site Schiff-base intermediate with acetaldehyde is the Lys-153. Catalysis depends on Lys-182, which acts as the Proton donor/acceptor.

This sequence belongs to the DeoC/FbaB aldolase family. DeoC type 1 subfamily.

It is found in the cytoplasm. It carries out the reaction 2-deoxy-D-ribose 5-phosphate = D-glyceraldehyde 3-phosphate + acetaldehyde. It functions in the pathway carbohydrate degradation; 2-deoxy-D-ribose 1-phosphate degradation; D-glyceraldehyde 3-phosphate and acetaldehyde from 2-deoxy-alpha-D-ribose 1-phosphate: step 2/2. Functionally, catalyzes a reversible aldol reaction between acetaldehyde and D-glyceraldehyde 3-phosphate to generate 2-deoxy-D-ribose 5-phosphate. In Streptococcus agalactiae serotype V (strain ATCC BAA-611 / 2603 V/R), this protein is Deoxyribose-phosphate aldolase.